Reading from the N-terminus, the 442-residue chain is GPI mannosyltransferase 1 (442 aa).

The next 8 helical transmembrane spans lie at I22–F42, I95–Y115, L177–I197, A242–F262, M307–V327, L336–I356, I361–A381, and I408–L428.

This sequence belongs to the PIGM family.

It is found in the endoplasmic reticulum membrane. The protein operates within glycolipid biosynthesis; glycosylphosphatidylinositol-anchor biosynthesis. Its function is as follows. Mannosyltransferase involved in glycosylphosphatidylinositol-anchor biosynthesis. Transfers the first alpha-1,4-mannose to GlcN-acyl-PI during GPI precursor assembly. The chain is GPI mannosyltransferase 1 (pigm) from Dictyostelium discoideum (Social amoeba).